A 110-amino-acid polypeptide reads, in one-letter code: Phosphoribosyl-ATP pyrophosphatase (110 aa).

This sequence belongs to the PRA-PH family.

It is found in the cytoplasm. The catalysed reaction is 1-(5-phospho-beta-D-ribosyl)-ATP + H2O = 1-(5-phospho-beta-D-ribosyl)-5'-AMP + diphosphate + H(+). The protein operates within amino-acid biosynthesis; L-histidine biosynthesis; L-histidine from 5-phospho-alpha-D-ribose 1-diphosphate: step 2/9. This chain is Phosphoribosyl-ATP pyrophosphatase, found in Lacticaseibacillus casei (strain BL23) (Lactobacillus casei).